Here is a 241-residue protein sequence, read N- to C-terminus: Uridylate kinase (241 aa).

Position 9–10 (9–10 (GS)) interacts with ATP. Glycine 44 contributes to the UMP binding site. The ATP site is built by glycine 45 and arginine 49. Residues aspartate 66 and 114–120 (VVAGQTT) each bind UMP. Residues threonine 140, phenylalanine 146, and aspartate 149 each contribute to the ATP site.

The protein belongs to the UMP kinase family. In terms of assembly, homohexamer.

It is found in the cytoplasm. The enzyme catalyses UMP + ATP = UDP + ADP. The protein operates within pyrimidine metabolism; CTP biosynthesis via de novo pathway; UDP from UMP (UMPK route): step 1/1. With respect to regulation, inhibited by UTP. Catalyzes the reversible phosphorylation of UMP to UDP. The protein is Uridylate kinase of Halobacterium salinarum (strain ATCC 29341 / DSM 671 / R1).